A 122-amino-acid chain; its full sequence is Large ribosomal subunit protein uL14 (122 aa).

Belongs to the universal ribosomal protein uL14 family. Part of the 50S ribosomal subunit. Forms a cluster with proteins L3 and L19. In the 70S ribosome, L14 and L19 interact and together make contacts with the 16S rRNA in bridges B5 and B8.

Binds to 23S rRNA. Forms part of two intersubunit bridges in the 70S ribosome. The chain is Large ribosomal subunit protein uL14 from Campylobacter fetus subsp. fetus (strain 82-40).